The chain runs to 361 residues: Free fatty acid receptor 4 (361 aa).

Residues 1–45 (MSPECARAAGDAPLRSLEQANRTRFSFFSDVKGDHRLLLAAVETT) are Extracellular-facing. Asn-21 carries an N-linked (GlcNAc...) asparagine glycan. Residues 46–66 (VLALIFAVSLLGNVCALVLVA) form a helical membrane-spanning segment. Residues 67–77 (RRRRRGTTACL) lie on the Cytoplasmic side of the membrane. A helical transmembrane segment spans residues 78-98 (VLNLFCADLLFISAIPLVLAV). Topologically, residues 99–112 (RWTEAWLLGPVACH) are extracellular. The cysteines at positions 111 and 194 are disulfide-linked. A helical membrane pass occupies residues 113 to 133 (LLFYLMTLSGSVTILTLAAVS). Residues 134-156 (LERMVCIVHLQRGVRGPGRRARA) lie on the Cytoplasmic side of the membrane. The chain crosses the membrane as a helical span at residues 157–177 (VLLTLIWGYSAVAALPLCVFF). Over 178-204 (RVVPQRLPGADQEISICTLIWPTIAGE) the chain is Extracellular. The helical transmembrane segment at 205-225 (ISWDVSFVTLNFLVPGLVIVI) threads the bilayer. The Cytoplasmic portion of the chain corresponds to 226-268 (SYSKILQITKASRKRLTVSLAYSESHQIRVSQQDFRLFRTLFL). Residues 269–289 (LMVSFFIMWSPIIITILLILI) form a helical membrane-spanning segment. The Extracellular segment spans residues 290–295 (QNFKQD). A helical membrane pass occupies residues 296–316 (LVIWPSLFFWVVAFTFANSAL). Residues 317–361 (NPILYNMTLCRNEWKKIFCCFWFPEKGAILTDTSVKRNDLSVISG) lie on the Cytoplasmic side of the membrane. Phosphothreonine occurs at positions 347 and 349. Residues Ser-350, Ser-357, and Ser-360 each carry the phosphoserine modification.

This sequence belongs to the G-protein coupled receptor 1 family. In terms of assembly, interacts (via C-terminus) with ARRB2 following LCFAs stimulation. Phosphorylated at two clusters of Ser and Thr residues located in the intracellular C-terminus. Prerequisite for FFAR4 internalization via an ARRB2-dependent pathway. In terms of tissue distribution, highly expressed in lung and colon.

It localises to the cell membrane. It is found in the endosome membrane. Its subcellular location is the lysosome membrane. The protein resides in the cell projection. The protein localises to the cilium membrane. Its function is as follows. G-protein-coupled receptor for long-chain fatty acids (LCFAs) with a major role in adipogenesis, energy metabolism and inflammation. Signals via G-protein and beta-arrestin pathways. LCFAs sensing initiates activation of phosphoinositidase C-linked G proteins GNAQ and GNA11 (G(q)/G(11)), inducing a variety of cellular responses via second messenger pathways such as intracellular calcium mobilization, modulation of cyclic adenosine monophosphate (cAMP) production, and mitogen-activated protein kinases (MAPKs). After LCFAs binding, associates with beta-arrestin ARRB2 that acts as an adapter protein coupling the receptor to specific downstream signaling pathways, as well as mediating receptor endocytosis. In response to dietary fats, plays an important role in the regulation of adipocyte proliferation and differentiation. Acts as a receptor for omega-3 polyunsaturated fatty acids (PUFAs) at primary cilium of perivascular preadipocytes, initiating an adipogenic program via cAMP and CTCF-dependent chromatin remodeling that ultimately results in transcriptional activation of adipogenic genes and cell cycle entry. Induces differentiation of brown and beige adipocytes probably via autocrine and endocrine functions of FGF21 hormone. Contributes to the thermogenic activation of brown adipose tissue and the browning of white adipose tissue. Activates brown adipocytes by initiating intracellular calcium signaling leading to mitochondrial depolarization and fission, and overall increased mitochondrial respiration. Consequently stimulates fatty acid uptake and oxidation in mitochondria together with UCP1-mediated thermogenic respiration, eventually reducing fat mass. Regulates bi-potential differentiation of bone marrow mesenchymal stem cells toward osteoblasts or adipocytes likely by up-regulating distinct integrins. In response to dietary fats regulates hormone secretion and appetite. Stimulates GIP and GLP1 secretion from enteroendocrine cells as well as GCG secretion in pancreatic alpha cells, thereby playing a role in the regulation of blood glucose levels. Negatively regulates glucose-induced SST secretion in pancreatic delta cells. Mediates LCFAs inhibition of GHRL secretion, an appetite-controlling hormone. In taste buds, contributes to sensing of dietary fatty acids by the gustatory system. During the inflammatory response, promotes anti-inflammatory M2 macrophage differentiation in adipose tissue. Mediates the anti-inflammatory effects of omega-3 PUFAs via inhibition of NLRP3 inflammasome activation. In this pathway, interacts with adapter protein ARRB2 and inhibits the priming step triggered by Toll-like receptors (TLRs) at the level of TAK1 and TAB1. Further inhibits the activation step when ARRB2 directly associates with NLRP3, leading to inhibition of pro-inflammatory cytokine release. Mediates LCFAs anti-apoptotic effects. The protein is Free fatty acid receptor 4 (FFAR4) of Macaca fascicularis (Crab-eating macaque).